Here is a 305-residue protein sequence, read N- to C-terminus: Putative glutamine--fructose-6-phosphate aminotransferase [isomerizing] (305 aa).

Cysteine 2 (nucleophile; for GATase activity) is an active-site residue. The Glutamine amidotransferase type-2 domain maps to 2 to 305 (CGIFGYCNFL…RLCITSAVCE (304 aa)).

It catalyses the reaction D-fructose 6-phosphate + L-glutamine = D-glucosamine 6-phosphate + L-glutamate. The protein operates within nucleotide-sugar biosynthesis; UDP-N-acetyl-alpha-D-glucosamine biosynthesis; alpha-D-glucosamine 6-phosphate from D-fructose 6-phosphate: step 1/1. Its function is as follows. Involved in amino sugar synthesis (formation of chitin, supplies the amino sugars of asparagine-linked oligosaccharides of glycoproteins). This Saccharomyces cerevisiae (strain Lalvin EC1118 / Prise de mousse) (Baker's yeast) protein is Putative glutamine--fructose-6-phosphate aminotransferase [isomerizing].